The following is a 332-amino-acid chain: Probable ABC transporter permease protein YphD (332 aa).

A run of 10 helical transmembrane segments spans residues 28 to 48 (GLLVVIAILYLVFSLNAPGFI), 63 to 83 (IGIAAWAMTLIIISGEIDVSV), 84 to 104 (GPMVAFVSVCLAFLLQFEVPL), 105 to 125 (AVACLLVLLLGALMGTLAGVL), 131 to 151 (VPSFVATLGLWSALRGMGLFM), 172 to 192 (FLGVPVSALIMIVLFALFVFI), 222 to 242 (VRILIFTLSGLLAAVTGILLA), 251 to 271 (GAANGLEFDVIAAVVVGGTAL), 278 to 298 (LFGTLLGVLVITLIGNGLVLL), and 303 to 323 (FFQQVVRGVIIVVAVLANILL).

This sequence belongs to the binding-protein-dependent transport system permease family. AraH/RbsC subfamily.

The protein localises to the cell inner membrane. Probably part of the binding-protein-dependent transport system YphDEF. Probably responsible for the translocation of the substrate across the membrane. The sequence is that of Probable ABC transporter permease protein YphD (yphD) from Escherichia coli (strain K12).